Here is a 166-residue protein sequence, read N- to C-terminus: Large ribosomal subunit protein uL10 (166 aa).

It belongs to the universal ribosomal protein uL10 family. As to quaternary structure, part of the ribosomal stalk of the 50S ribosomal subunit. The N-terminus interacts with L11 and the large rRNA to form the base of the stalk. The C-terminus forms an elongated spine to which L12 dimers bind in a sequential fashion forming a multimeric L10(L12)X complex.

Functionally, forms part of the ribosomal stalk, playing a central role in the interaction of the ribosome with GTP-bound translation factors. This chain is Large ribosomal subunit protein uL10, found in Streptococcus equi subsp. zooepidemicus (strain MGCS10565).